The sequence spans 785 residues: Probable ATP-dependent RNA helicase ddx17 (785 aa).

4 stretches are compositionally biased toward low complexity: residues 1-11, 18-37, 49-95, and 105-177; these read MSYNSSNSGSG, SGNS…GNRS, SYNR…YGPS, and GSSS…NGYS. Positions 1 to 233 are disordered; it reads MSYNSSNSGS…TPSTSYNGGS (233 aa). The segment covering 178-191 has biased composition (polar residues); sequence KPTSNYSYSNGYTG. Over residues 192-233 the composition is skewed to low complexity; that stretch reads PTTNYSSYSNGYSTPPTSTSTSSSSTTTTTTTTPSTSYNGGS. A Q motif motif is present at residues 384-412; the sequence is MQFTQAPFPGYLMKEIIGAGFPNPTPIQS. Residues 415–590 form the Helicase ATP-binding domain; the sequence is WPIALKGRDI…HDFLTDHIQV (176 aa). 428-435 lines the ATP pocket; sequence AKTGSGKT. The DEAD box signature appears at 538-541; sequence DEAD. One can recognise a Helicase C-terminal domain in the interval 602 to 763; it reads NVRQIVEVCQ…KIPIELSNLS (162 aa). The segment covering 764–774 has biased composition (polar residues); the sequence is VTPSTSSNTKK. The segment at 764 to 785 is disordered; the sequence is VTPSTSSNTKKFSPYPTYSKRY.

It belongs to the DEAD box helicase family. DDX5/DBP2 subfamily.

It is found in the cytoplasm. The protein localises to the nucleus. It carries out the reaction ATP + H2O = ADP + phosphate + H(+). Probable ATP-dependent RNA helicase which may be involved nonsense-mediated mRNA decay and ribosome biogenesis through rRNA processing. This chain is Probable ATP-dependent RNA helicase ddx17 (ddx17), found in Dictyostelium discoideum (Social amoeba).